Consider the following 948-residue polypeptide: Zinc finger CCCH domain-containing protein 18 (948 aa).

Residue methionine 1 is modified to N-acetylmethionine. Positions methionine 1–threonine 219 are disordered. Serine 6 carries the post-translational modification Phosphoserine. Acidic residues predominate over residues glutamate 15–aspartate 25. 8 positions are modified to phosphoserine: serine 33, serine 45, serine 58, serine 64, serine 71, serine 75, serine 80, and serine 92. Residues alanine 70–serine 86 show a composition bias toward basic and acidic residues. The segment covering glutamate 95–threonine 105 has biased composition (acidic residues). Position 105 is a phosphothreonine (threonine 105). Serine 106 and serine 114 each carry phosphoserine. Basic and acidic residues predominate over residues serine 106–aspartate 120. Acidic residues-rich tracts occupy residues glutamate 121–glutamate 132 and glutamine 139–lysine 154. Serine 169 carries the phosphoserine modification. The span at glutamate 177–aspartate 186 shows a compositional bias: basic and acidic residues. Residues aspartate 187–glutamate 203 are compositionally biased toward acidic residues. A compositionally biased stretch (basic and acidic residues) spans glycine 204–lysine 213. Residues arginine 215 to valine 241 form a C3H1-type zinc finger. Residue glycine 245 is modified to Omega-N-methylarginine. Disordered stretches follow at residues alanine 272–alanine 296 and tyrosine 388–arginine 922. The span at glutamate 392–lysine 480 shows a compositional bias: basic and acidic residues. Positions histidine 395 to aspartate 460 form a coiled coil. Serine 483 carries the post-translational modification Phosphoserine. Residue lysine 506 forms a Glycyl lysine isopeptide (Lys-Gly) (interchain with G-Cter in SUMO2) linkage. Over residues lysine 506–arginine 516 the composition is skewed to basic and acidic residues. Serine 528, serine 530, and serine 532 each carry phosphoserine. Residues serine 541–proline 602 show a composition bias toward low complexity. The segment covering serine 603 to arginine 612 has biased composition (pro residues). Glycyl lysine isopeptide (Lys-Gly) (interchain with G-Cter in SUMO2) cross-links involve residues lysine 618 and lysine 657. Residues lysine 657–arginine 666 show a composition bias toward basic and acidic residues. Composition is skewed to low complexity over residues glycine 688–serine 721 and alanine 732–alanine 746. Residues lysine 756–proline 770 show a composition bias toward basic and acidic residues. Residues proline 774–glycine 804 are compositionally biased toward low complexity. Lysine 810 carries the N6-acetyllysine modification. Lysine 813 participates in a covalent cross-link: Glycyl lysine isopeptide (Lys-Gly) (interchain with G-Cter in SUMO2). Residues alanine 820 to glutamine 837 show a composition bias toward basic and acidic residues. Phosphoserine is present on residues serine 838, serine 847, serine 863, serine 888, and serine 891. Residues serine 888–threonine 898 show a composition bias toward polar residues. Low complexity predominate over residues glycine 902–threonine 919. Lysine 903 is covalently cross-linked (Glycyl lysine isopeptide (Lys-Gly) (interchain with G-Cter in SUMO2)). Residues lysine 916–proline 945 are a coiled coil.

In terms of assembly, interacts with ZFC3H1 in a RNase-insensitive manner.

Its subcellular location is the nucleus. The sequence is that of Zinc finger CCCH domain-containing protein 18 (Zc3h18) from Mus musculus (Mouse).